Here is a 426-residue protein sequence, read N- to C-terminus: Enolase (426 aa).

Residue glutamine 163 participates in (2R)-2-phosphoglycerate binding. Glutamate 205 functions as the Proton donor in the catalytic mechanism. Mg(2+) contacts are provided by aspartate 242, glutamate 285, and aspartate 312. Residues lysine 337, arginine 366, serine 367, and lysine 388 each coordinate (2R)-2-phosphoglycerate. Lysine 337 (proton acceptor) is an active-site residue.

Belongs to the enolase family. The cofactor is Mg(2+).

It localises to the cytoplasm. The protein localises to the secreted. The protein resides in the cell surface. The enzyme catalyses (2R)-2-phosphoglycerate = phosphoenolpyruvate + H2O. It functions in the pathway carbohydrate degradation; glycolysis; pyruvate from D-glyceraldehyde 3-phosphate: step 4/5. Functionally, catalyzes the reversible conversion of 2-phosphoglycerate (2-PG) into phosphoenolpyruvate (PEP). It is essential for the degradation of carbohydrates via glycolysis. In Caulobacter vibrioides (strain ATCC 19089 / CIP 103742 / CB 15) (Caulobacter crescentus), this protein is Enolase.